The sequence spans 211 residues: Thymidylate kinase (211 aa).

10-17 (GGDGVGKS) is a binding site for ATP.

It belongs to the thymidylate kinase family.

It carries out the reaction dTMP + ATP = dTDP + ADP. Phosphorylation of dTMP to form dTDP in both de novo and salvage pathways of dTTP synthesis. The polypeptide is Thymidylate kinase (Clavibacter sepedonicus (Clavibacter michiganensis subsp. sepedonicus)).